Here is a 424-residue protein sequence, read N- to C-terminus: UDP-N-acetylglucosamine 1-carboxyvinyltransferase (424 aa).

Position 22–23 (22–23) interacts with phosphoenolpyruvate; sequence KN. Arginine 98 is a binding site for UDP-N-acetyl-alpha-D-glucosamine. The Proton donor role is filled by cysteine 122. Position 122 is a 2-(S-cysteinyl)pyruvic acid O-phosphothioketal (cysteine 122). UDP-N-acetyl-alpha-D-glucosamine is bound by residues 127 to 131, aspartate 312, and isoleucine 334; that span reads RPVDQ.

The protein belongs to the EPSP synthase family. MurA subfamily.

It is found in the cytoplasm. The enzyme catalyses phosphoenolpyruvate + UDP-N-acetyl-alpha-D-glucosamine = UDP-N-acetyl-3-O-(1-carboxyvinyl)-alpha-D-glucosamine + phosphate. It functions in the pathway cell wall biogenesis; peptidoglycan biosynthesis. Its function is as follows. Cell wall formation. Adds enolpyruvyl to UDP-N-acetylglucosamine. The sequence is that of UDP-N-acetylglucosamine 1-carboxyvinyltransferase from Xanthomonas oryzae pv. oryzae (strain MAFF 311018).